Reading from the N-terminus, the 221-residue chain is Toxin coregulated pilus biosynthesis protein P (221 aa).

The ompR/PhoB-type DNA-binding region spans 5-109 (RVIYQFPDNL…VKLQGYRINI (105 aa)). A helical transmembrane segment spans residues 143 to 163 (VVPYLVFSALYVALLPVIWWS).

The protein resides in the cell membrane. In terms of biological role, involved in TCP pilus biogenesis. This chain is Toxin coregulated pilus biosynthesis protein P (tcpP), found in Vibrio cholerae serotype O1 (strain ATCC 39315 / El Tor Inaba N16961).